We begin with the raw amino-acid sequence, 530 residues long: Chaperonin GroEL, chloroplastic (530 aa).

ATP-binding positions include 29–32 (TLGP), 86–90 (DGTTT), glycine 414, 480–482 (DAL), and aspartate 496.

It belongs to the chaperonin (HSP60) family. As to quaternary structure, forms a cylinder of 14 subunits composed of two heptameric rings stacked back-to-back. Interacts with the co-chaperonin GroES.

It is found in the plastid. The protein localises to the chloroplast. It carries out the reaction ATP + H2O + a folded polypeptide = ADP + phosphate + an unfolded polypeptide.. Together with its co-chaperonin GroES, plays an essential role in assisting protein folding. The GroEL-GroES system forms a nano-cage that allows encapsulation of the non-native substrate proteins and provides a physical environment optimized to promote and accelerate protein folding. This chain is Chaperonin GroEL, chloroplastic, found in Cyanidium caldarium (Red alga).